The chain runs to 392 residues: UDP-N-acetylglucosamine--N-acetylmuramyl-(pentapeptide) pyrophosphoryl-undecaprenol N-acetylglucosamine transferase (392 aa).

UDP-N-acetyl-alpha-D-glucosamine is bound by residues 14–16 (TGG), N124, R167, S195, I251, and Q296.

This sequence belongs to the glycosyltransferase 28 family. MurG subfamily.

The protein localises to the cell inner membrane. It catalyses the reaction di-trans,octa-cis-undecaprenyl diphospho-N-acetyl-alpha-D-muramoyl-L-alanyl-D-glutamyl-meso-2,6-diaminopimeloyl-D-alanyl-D-alanine + UDP-N-acetyl-alpha-D-glucosamine = di-trans,octa-cis-undecaprenyl diphospho-[N-acetyl-alpha-D-glucosaminyl-(1-&gt;4)]-N-acetyl-alpha-D-muramoyl-L-alanyl-D-glutamyl-meso-2,6-diaminopimeloyl-D-alanyl-D-alanine + UDP + H(+). The protein operates within cell wall biogenesis; peptidoglycan biosynthesis. Cell wall formation. Catalyzes the transfer of a GlcNAc subunit on undecaprenyl-pyrophosphoryl-MurNAc-pentapeptide (lipid intermediate I) to form undecaprenyl-pyrophosphoryl-MurNAc-(pentapeptide)GlcNAc (lipid intermediate II). This Sphingopyxis alaskensis (strain DSM 13593 / LMG 18877 / RB2256) (Sphingomonas alaskensis) protein is UDP-N-acetylglucosamine--N-acetylmuramyl-(pentapeptide) pyrophosphoryl-undecaprenol N-acetylglucosamine transferase.